Consider the following 63-residue polypeptide: Putative alpha-neurotoxin RjAa9 (63 aa).

An LCN-type CS-alpha/beta domain is found at K1–R60. 4 disulfide bridges follow: C11–C59, C15–C35, C21–C42, and C25–C44.

This sequence belongs to the long (4 C-C) scorpion toxin superfamily. Sodium channel inhibitor family. Alpha subfamily. As to expression, expressed by the venom gland.

The protein localises to the secreted. Its function is as follows. Alpha toxins bind voltage-independently at site-3 of sodium channels (Nav) and inhibits the inactivation of the activated channels, thereby blocking neuronal transmission. This chain is Putative alpha-neurotoxin RjAa9, found in Rhopalurus junceus (Caribbean blue scorpion).